The following is a 72-amino-acid chain: Defensin-like protein 35 (72 aa).

A signal peptide spans 1–22 (MASNKISFSFVLCLYMCSLLDA). Intrachain disulfides connect C32/C58, C44/C67, and C48/C69.

Belongs to the DEFL family.

Its subcellular location is the secreted. In Arabidopsis thaliana (Mouse-ear cress), this protein is Defensin-like protein 35.